The chain runs to 58 residues: NADH dehydrogenase [ubiquinone] 1 beta subcomplex subunit 1 (58 aa).

The helical transmembrane segment at 11–27 (HWVHVLVPMGFVIGCYL) threads the bilayer.

This sequence belongs to the complex I NDUFB1 subunit family. As to quaternary structure, complex I is composed of 45 different subunits.

The protein resides in the mitochondrion inner membrane. In terms of biological role, accessory subunit of the mitochondrial membrane respiratory chain NADH dehydrogenase (Complex I) that is believed not to be involved in catalysis. Complex I functions in the transfer of electrons from NADH to the respiratory chain. The immediate electron acceptor for the enzyme is believed to be ubiquinone. The polypeptide is NADH dehydrogenase [ubiquinone] 1 beta subcomplex subunit 1 (NDUFB1) (Homo sapiens (Human)).